The primary structure comprises 184 residues: Bacterial microcompartment shell protein PduT (184 aa).

BMC domains are found at residues 4–86 and 96–182; these read AIGI…PAIS and AVGI…RQMV. Cysteine 38 provides a ligand contact to [4Fe-4S] cluster.

This sequence belongs to the bacterial microcompartments protein family. As to quaternary structure, homotrimerizes to form a pseudohexamer with a large central pore, which is probably the binding site for the [4Fe-4S] center. Interacts with PduS. Originally suggested to be a homotetramer; this is incorrect. Requires [4Fe-4S] cluster as cofactor.

The protein resides in the bacterial microcompartment. The protein operates within polyol metabolism; 1,2-propanediol degradation. Functionally, a minor shell protein of the bacterial microcompartment (BMC) dedicated to 1,2-propanediol (1,2-PD) degradation. Overexpression of this protein leads to cells with either deposits or having lamina-like structures in the cytoplasm. Not absolutely required to make artificial BMCs. May selectively transport specific metabolites. In terms of biological role, expression of a cosmid containing the full 21-gene pdu operon in E.coli allows E.coli to grow on 1,2-propanediol (1,2-PD) with the appearance of bacterial microcompartments (BMC) in its cytoplasm. Its function is as follows. The 1,2-PD-specific bacterial microcompartment (BMC) concentrates low levels of 1,2-PD catabolic enzymes, concentrates volatile reaction intermediates thus enhancing pathway flux and keeps the level of toxic, mutagenic propionaldehyde low. This is Bacterial microcompartment shell protein PduT from Citrobacter freundii.